The sequence spans 182 residues: Fatty-acid and retinol-binding protein 1 (182 aa).

The first 17 residues, 1–17 (MIRATIILAAVAALAFS), serve as a signal peptide directing secretion. A coiled-coil region spans residues 86–106 (EKASKLHQIVKDKVNALNDEA).

The protein belongs to the fatty-acid and retinol-binding protein (FARBP) family.

The protein localises to the secreted. Its function is as follows. Probably binds lipids. This is Fatty-acid and retinol-binding protein 1 (far-1) from Caenorhabditis elegans.